The primary structure comprises 636 residues: Chaperone protein HtpG (636 aa).

The interval 1 to 342 is a; substrate-binding; the sequence is MSGETLEFQA…AHDLSLNISR (342 aa). The interval 343 to 558 is b; it reads ELLQQDRQIQ…AHDVTPTLEK (216 aa). The tract at residues 559 to 636 is c; that stretch reads MYRAMGHEVP…ILAERLARTL (78 aa).

This sequence belongs to the heat shock protein 90 family. As to quaternary structure, homodimer.

Its subcellular location is the cytoplasm. In terms of biological role, molecular chaperone. Has ATPase activity. The chain is Chaperone protein HtpG from Salinispora arenicola (strain CNS-205).